The following is a 145-amino-acid chain: HIDAETMTLHHDKHHATYVANANAALEKHPEIGEDLEALLSDVDALPADIRQALINNGGGHLNHALFWELLSPEKTEISAELAADIDETFGSFDAFKEAFTTAATTRFGSGWAFLVVNPKGKLEVISTANQDTPITQGLKPILAL.

Positions 10 and 64 each coordinate Fe(3+). Residues His-10 and His-64 each contribute to the Mn(2+) site.

This sequence belongs to the iron/manganese superoxide dismutase family. Mn(2+) serves as cofactor. Fe(3+) is required as a cofactor.

The catalysed reaction is 2 superoxide + 2 H(+) = H2O2 + O2. Destroys superoxide anion radicals which are normally produced within the cells and which are toxic to biological systems. Catalyzes the dismutation of superoxide anion radicals into O2 and H2O2 by successive reduction and oxidation of the transition metal ion at the active site. The polypeptide is Superoxide dismutase [Mn/Fe] (sodA) (Streptococcus acidominimus).